Reading from the N-terminus, the 589-residue chain is Aspartate--tRNA ligase (589 aa).

Glu176 is a binding site for L-aspartate. The aspartate stretch occupies residues 200-203 (QLFK). L-aspartate is bound at residue Arg222. Residues 222-224 (RDE) and Gln231 each bind ATP. His449 is a binding site for L-aspartate. Glu483 contacts ATP. L-aspartate is bound at residue Arg490. An ATP-binding site is contributed by 535–538 (GLDR).

The protein belongs to the class-II aminoacyl-tRNA synthetase family. Type 1 subfamily. Homodimer.

It is found in the cytoplasm. The catalysed reaction is tRNA(Asp) + L-aspartate + ATP = L-aspartyl-tRNA(Asp) + AMP + diphosphate. In terms of biological role, catalyzes the attachment of L-aspartate to tRNA(Asp) in a two-step reaction: L-aspartate is first activated by ATP to form Asp-AMP and then transferred to the acceptor end of tRNA(Asp). This chain is Aspartate--tRNA ligase, found in Enterococcus faecalis (strain ATCC 700802 / V583).